Here is a 65-residue protein sequence, read N- to C-terminus: Large ribosomal subunit protein uL30 (65 aa).

The protein belongs to the universal ribosomal protein uL30 family. As to quaternary structure, part of the 50S ribosomal subunit.

This chain is Large ribosomal subunit protein uL30, found in Brucella suis (strain ATCC 23445 / NCTC 10510).